Here is a 426-residue protein sequence, read N- to C-terminus: Zinc finger protein 662 (426 aa).

Residues methionine 1–alanine 44 form the KRAB domain. C2H2-type zinc fingers lie at residues tyrosine 192–histidine 214, tyrosine 220–histidine 242, tyrosine 248–histidine 270, phenylalanine 276–histidine 298, tyrosine 304–histidine 326, tyrosine 332–histidine 354, histidine 360–histidine 382, and tyrosine 388–histidine 410.

The protein belongs to the krueppel C2H2-type zinc-finger protein family.

It localises to the nucleus. Its function is as follows. May be involved in transcriptional regulation. This is Zinc finger protein 662 (ZNF662) from Homo sapiens (Human).